The following is a 407-amino-acid chain: 1-deoxy-D-xylulose 5-phosphate reductoisomerase (407 aa).

Residues threonine 25, glycine 26, serine 27, isoleucine 28, asparagine 53, and asparagine 136 each coordinate NADPH. Lysine 137 is a binding site for 1-deoxy-D-xylulose 5-phosphate. NADPH is bound at residue glutamate 138. Aspartate 162 provides a ligand contact to Mn(2+). Positions 163, 164, 188, and 211 each coordinate 1-deoxy-D-xylulose 5-phosphate. Glutamate 164 provides a ligand contact to Mn(2+). Position 217 (glycine 217) interacts with NADPH. The 1-deoxy-D-xylulose 5-phosphate site is built by serine 224, asparagine 229, lysine 230, and glutamate 233. Glutamate 233 is a binding site for Mn(2+).

The protein belongs to the DXR family. The cofactor is Mg(2+). Mn(2+) is required as a cofactor.

It catalyses the reaction 2-C-methyl-D-erythritol 4-phosphate + NADP(+) = 1-deoxy-D-xylulose 5-phosphate + NADPH + H(+). The protein operates within isoprenoid biosynthesis; isopentenyl diphosphate biosynthesis via DXP pathway; isopentenyl diphosphate from 1-deoxy-D-xylulose 5-phosphate: step 1/6. In terms of biological role, catalyzes the NADPH-dependent rearrangement and reduction of 1-deoxy-D-xylulose-5-phosphate (DXP) to 2-C-methyl-D-erythritol 4-phosphate (MEP). The chain is 1-deoxy-D-xylulose 5-phosphate reductoisomerase from Afipia carboxidovorans (strain ATCC 49405 / DSM 1227 / KCTC 32145 / OM5) (Oligotropha carboxidovorans).